The primary structure comprises 278 residues: Phosphonates import ATP-binding protein PhnC 1 (278 aa).

The ABC transporter domain maps to 5–253 (IRVDSLNKTF…FLNELYGAEG (249 aa)). Position 37-44 (37-44 (GASGSGKS)) interacts with ATP.

This sequence belongs to the ABC transporter superfamily. Phosphonates importer (TC 3.A.1.9.1) family. In terms of assembly, the complex is composed of two ATP-binding proteins (PhnC), two transmembrane proteins (PhnE) and a solute-binding protein (PhnD).

The protein localises to the cell inner membrane. It catalyses the reaction phosphonate(out) + ATP + H2O = phosphonate(in) + ADP + phosphate + H(+). Functionally, part of the ABC transporter complex PhnCDE involved in phosphonates import. Responsible for energy coupling to the transport system. This Pseudomonas aeruginosa (strain UCBPP-PA14) protein is Phosphonates import ATP-binding protein PhnC 1.